The sequence spans 488 residues: Histone deacetylase 2 (488 aa).

Residues 9-322 are histone deacetylase; it reads KKKVCYYYDG…WTYETAVALD (314 aa). The 1D-myo-inositol 1,4,5,6-tetrakisphosphate site is built by Gly28 and Lys32. Lys75 is subject to N6-acetyllysine; alternate. Residue Lys75 forms a Glycyl lysine isopeptide (Lys-Gly) (interchain with G-Cter in SUMO2); alternate linkage. His142 is an active-site residue. Asp175, Asp177, His179, Phe188, Thr191, Val194, Ser198, and Phe199 together coordinate Ca(2+). Positions 177 and 179 each coordinate Zn(2+). The residue at position 221 (Lys221) is an N6-acetyllysine. Tyr223 is a binding site for Ca(2+). Residue Cys262 is modified to S-nitrosocysteine. Asp265 lines the Zn(2+) pocket. Arg271 provides a ligand contact to 1D-myo-inositol 1,4,5,6-tetrakisphosphate. Cys274 bears the S-nitrosocysteine mark. Residues 389 to 488 form a disordered region; it reads AVHEDSGDED…GTKSEQLSNP (100 aa). A phosphoserine mark is found at Ser394, Ser407, Ser422, and Ser424. Residues 402-417 are compositionally biased toward basic and acidic residues; that stretch reads PDKRISIRASDKRIAC. The segment covering 418-428 has biased composition (acidic residues); the sequence is DEEFSDSEDEG. The segment covering 429 to 481 has biased composition (basic and acidic residues); the sequence is EGGRRNVADHKKGAKKARIEEDKKETEDKKTDVKEEDKSKDNSGEKTDTKGTK. Residues Lys439, Lys452, Lys458, Lys462, Lys478, and Lys481 each participate in a glycyl lysine isopeptide (Lys-Gly) (interchain with G-Cter in SUMO2) cross-link.

The protein belongs to the histone deacetylase family. HD type 1 subfamily. In terms of assembly, part of the core histone deacetylase (HDAC) complex composed of HDAC1, HDAC2, RBBP4 and RBBP7, the core complex associates with SIN3, SAP18 and SAP30 to form the SIN3 HDAC complex. Component of the nucleosome remodeling and deacetylase (NuRD) repressor complex, composed of core proteins MTA1, MTA2, MTA3, RBBP4, RBBP7, HDAC1, HDAC2, MBD2, MBD3, and peripherally associated proteins CDK2AP1, CDK2AP2, GATAD2A, GATAD2B, CHD3, CHD4 and CHD5. The exact stoichiometry of the NuRD complex is unknown, and some subunits such as MBD2 and MBD3, GATAD2A and GATAD2B, and CHD3, CHD4 and CHD5 define mutually exclusive NuRD complexes. Component of a RCOR/GFI/KDM1A/HDAC complex. Component of a BHC histone deacetylase complex that contains HDAC1, HDAC2, HMG20B, KDM1A, RCOR1 and PHF21A. The BHC complex may also contain ZMYM2, ZNF217, ZMYM3, GSE1 and GTF2I. Part of a complex containing the core histones H2A, H2B, H3 and H4, DEK and unphosphorylated DAXX. Part of a complex containing ATR and CHD4. Forms a heterologous complex at least with YY1. Interacts in the late S-phase of DNA-replication with DNMT1 in the other transcriptional repressor complex composed of DNMT1, DMAP1, PCNA, CAF1. Component of a mSin3A corepressor complex that contains SIN3A, SAP130, SUDS3, ARID4B, HDAC1 and HDAC2. Part of a complex composed of TRIM28, HDAC1, HDAC2 and EHMT2. Part of a complex containing at least CDYL, MIER1, MIER2, HDAC1 and HDAC2. Component of a histone deacetylase complex containing DNTTIP1, ZNF541, HDAC1 and HDAC2. Forms a complex comprising APPL1, RUVBL2, APPL2, CTNNB1 and HDAC1. Interacts directly with GFI1. Interacts directly with GFI1B. Interacts with APEX1; the interaction is not dependent on the acetylated status of APEX1. Interacts with ATR. Interacts with BCL6 (non-acetylated form). Interacts with BEND3. Interacts with CBFA2T3. Interacts with CDK2AP1. Interacts with CHD4. Interacts with CHD5. Interacts with CHFR. Interacts with CRY1. Interacts with DNMT1. Interacts with GATAD2A. Interacts with HCFC1. Interacts with HDAC7. Interacts with HDAC10. Interacts with INSM1. Interacts with KDM4A. Interacts with MACROH2A1 (via the non-histone region). Interacts with MBD3L2. Interacts with MTA1, with a preference for sumoylated MTA1. Interacts with NACC2. Interacts with NRIP1. Interacts with PELP1. Interacts with PIMREG. Interacts with PRDM6. Interacts with PWWP2B. Interacts with SAP30. Interacts with SAP30L. Interacts with SETDB1. Interacts with SIX3. Interacts with SMARCAD1. Interacts with SNW1. Interacts with SPHK2. Interacts with SPEN/MINT. Interacts (CK2 phosphorylated form) with SP3. Interacts with SUV39H1. Interacts with TSHZ3 (via its N-terminus). Interacts with ZMYND8. Interacts with ZNF431. Interacts with ZNF263; recruited to the SIX3 promoter along with other proteins involved in chromatin modification and transcriptional corepression where it contributes to transcriptional repression. Identified in a complex with HDAC1, KCTD19, DNTTIP1 and ZNF541. Component of the SIN3B complex, which includes SIN3B, HDAC2, PHF12 and MORF4L1; interacts directly with all subunits. Zn(2+) serves as cofactor. It depends on Ca(2+) as a cofactor. S-nitrosylated by GAPDH. In neurons, S-nitrosylation at Cys-262 and Cys-274 does not affect enzyme activity, but induces HDAC2 release from chromatin. This in turn increases acetylation of histones surrounding neurotrophin-dependent gene promoters and promotes their transcription. In embryonic cortical neurons, S-Nitrosylation regulates dendritic growth and branching. In terms of tissue distribution, widely expressed; lower levels in brain and lung.

It localises to the nucleus. Its subcellular location is the cytoplasm. It catalyses the reaction N(6)-acetyl-L-lysyl-[histone] + H2O = L-lysyl-[histone] + acetate. It carries out the reaction N(6)-acetyl-L-lysyl-[protein] + H2O = L-lysyl-[protein] + acetate. The enzyme catalyses N(6)-(2E)-butenoyl-L-lysyl-[protein] + H2O = (2E)-2-butenoate + L-lysyl-[protein]. The catalysed reaction is N(6)-(2-hydroxyisobutanoyl)-L-lysyl-[protein] + H2O = 2-hydroxy-2-methylpropanoate + L-lysyl-[protein]. It catalyses the reaction N(6)-[(S)-lactoyl]-L-lysyl-[protein] + H2O = (S)-lactate + L-lysyl-[protein]. Inositol tetraphosphate (1D-myo-inositol 1,4,5,6-tetrakisphosphate) may act as an intermolecular glue between HDAC2 and N-Cor repressor complex components. Histone deacetylase that catalyzes the deacetylation of lysine residues on the N-terminal part of the core histones (H2A, H2B, H3 and H4). Histone deacetylation gives a tag for epigenetic repression and plays an important role in transcriptional regulation, cell cycle progression and developmental events. Histone deacetylases act via the formation of large multiprotein complexes. Forms transcriptional repressor complexes by associating with MAD, SIN3, YY1 and N-COR. Component of a RCOR/GFI/KDM1A/HDAC complex that suppresses, via histone deacetylase (HDAC) recruitment, a number of genes implicated in multilineage blood cell development. Acts as a component of the histone deacetylase NuRD complex which participates in the remodeling of chromatin. Component of the SIN3B complex that represses transcription and counteracts the histone acetyltransferase activity of EP300 through the recognition H3K27ac marks by PHF12 and the activity of the histone deacetylase HDAC2. Also deacetylates non-histone targets: deacetylates TSHZ3, thereby regulating its transcriptional repressor activity. May be involved in the transcriptional repression of circadian target genes, such as PER1, mediated by CRY1 through histone deacetylation. Involved in MTA1-mediated transcriptional corepression of TFF1 and CDKN1A. In addition to protein deacetylase activity, also acts as a protein-lysine deacylase by recognizing other acyl groups: catalyzes removal of (2E)-butenoyl (crotonyl), lactoyl (lactyl) and 2-hydroxyisobutanoyl (2-hydroxyisobutyryl) acyl groups from lysine residues, leading to protein decrotonylation, delactylation and de-2-hydroxyisobutyrylation, respectively. The sequence is that of Histone deacetylase 2 from Homo sapiens (Human).